Reading from the N-terminus, the 222-residue chain is Phosphate-specific transport system accessory protein PhoU homolog 1 (222 aa).

This sequence belongs to the PhoU family. Homodimer.

The protein resides in the cytoplasm. In terms of biological role, plays a role in the regulation of phosphate uptake. The sequence is that of Phosphate-specific transport system accessory protein PhoU homolog 1 (phoU1) from Mycobacterium leprae (strain TN).